The chain runs to 248 residues: Endonuclease V (248 aa).

Residues Asp-54 and Asp-118 each contribute to the Mg(2+) site.

It belongs to the endonuclease V family. It depends on Mg(2+) as a cofactor.

Its subcellular location is the cytoplasm. It catalyses the reaction Endonucleolytic cleavage at apurinic or apyrimidinic sites to products with a 5'-phosphate.. Functionally, DNA repair enzyme involved in the repair of deaminated bases. Selectively cleaves double-stranded DNA at the second phosphodiester bond 3' to a deoxyinosine leaving behind the intact lesion on the nicked DNA. The protein is Endonuclease V of Natronomonas pharaonis (strain ATCC 35678 / DSM 2160 / CIP 103997 / JCM 8858 / NBRC 14720 / NCIMB 2260 / Gabara) (Halobacterium pharaonis).